A 325-amino-acid polypeptide reads, in one-letter code: Probable serine/threonine-protein phosphatase 2A activator 1 (325 aa).

This sequence belongs to the PTPA-type PPIase family.

It is found in the cytoplasm. The catalysed reaction is [protein]-peptidylproline (omega=180) = [protein]-peptidylproline (omega=0). Its function is as follows. PPIases accelerate the folding of proteins. It catalyzes the cis-trans isomerization of proline imidic peptide bonds in oligopeptides. Acts as a regulatory subunit for PP2A-like phosphatases modulating their activity or substrate specificity, probably by inducing a conformational change in the catalytic subunit, a direct target of the PPIase. The polypeptide is Probable serine/threonine-protein phosphatase 2A activator 1 (ppp2r4A) (Dictyostelium discoideum (Social amoeba)).